Here is a 315-residue protein sequence, read N- to C-terminus: tRNA-cytidine(32) 2-sulfurtransferase (315 aa).

Residues 54–59 (SGGKDS) carry the PP-loop motif motif. [4Fe-4S] cluster-binding residues include Cys-129, Cys-132, and Cys-220.

Belongs to the TtcA family. In terms of assembly, homodimer. The cofactor is Mg(2+). [4Fe-4S] cluster is required as a cofactor.

Its subcellular location is the cytoplasm. The catalysed reaction is cytidine(32) in tRNA + S-sulfanyl-L-cysteinyl-[cysteine desulfurase] + AH2 + ATP = 2-thiocytidine(32) in tRNA + L-cysteinyl-[cysteine desulfurase] + A + AMP + diphosphate + H(+). The protein operates within tRNA modification. Catalyzes the ATP-dependent 2-thiolation of cytidine in position 32 of tRNA, to form 2-thiocytidine (s(2)C32). The sulfur atoms are provided by the cysteine/cysteine desulfurase (IscS) system. This Bordetella avium (strain 197N) protein is tRNA-cytidine(32) 2-sulfurtransferase.